A 209-amino-acid chain; its full sequence is Uracil phosphoribosyltransferase (209 aa).

5-phospho-alpha-D-ribose 1-diphosphate-binding positions include Arg-79, Arg-104, and 131 to 139; that span reads DPLLATGNS. Uracil contacts are provided by residues Ile-194 and 199 to 201; that span reads GDA. Asp-200 lines the 5-phospho-alpha-D-ribose 1-diphosphate pocket.

Belongs to the UPRTase family. Requires Mg(2+) as cofactor.

The catalysed reaction is UMP + diphosphate = 5-phospho-alpha-D-ribose 1-diphosphate + uracil. It functions in the pathway pyrimidine metabolism; UMP biosynthesis via salvage pathway; UMP from uracil: step 1/1. With respect to regulation, allosterically activated by GTP. Catalyzes the conversion of uracil and 5-phospho-alpha-D-ribose 1-diphosphate (PRPP) to UMP and diphosphate. The protein is Uracil phosphoribosyltransferase of Rhodococcus opacus (strain B4).